The following is a 268-amino-acid chain: Unknown seed protein USP (268 aa).

Positions 1-25 (MEFAHLTVLSLFCLAFVGITATSSG) are cleaved as a signal peptide. In terms of domain architecture, BURP spans 68 to 259 (LFFEHDLHPG…GNKAAAWVPN (192 aa)).

As to expression, expressed in seeds. Detected only in the embryo. In germinating seedlings, detected in roots, root caps, root hairs, vascular bundle, mesophyll cells and epidermal cells of the cotyledons and the hypocotyl.

It is found in the golgi apparatus. Its subcellular location is the golgi stack. The protein localises to the prevacuolar compartment. Associated with the protein storage vacuole formation. This is Unknown seed protein USP from Vicia faba (Broad bean).